We begin with the raw amino-acid sequence, 350 residues long: S-adenosylmethionine:tRNA ribosyltransferase-isomerase (350 aa).

The protein belongs to the QueA family. Monomer.

It localises to the cytoplasm. The catalysed reaction is 7-aminomethyl-7-carbaguanosine(34) in tRNA + S-adenosyl-L-methionine = epoxyqueuosine(34) in tRNA + adenine + L-methionine + 2 H(+). It functions in the pathway tRNA modification; tRNA-queuosine biosynthesis. Its function is as follows. Transfers and isomerizes the ribose moiety from AdoMet to the 7-aminomethyl group of 7-deazaguanine (preQ1-tRNA) to give epoxyqueuosine (oQ-tRNA). In Bacillus cereus (strain Q1), this protein is S-adenosylmethionine:tRNA ribosyltransferase-isomerase.